The following is a 377-amino-acid chain: Nuclear pore complex protein NUP54 (377 aa).

Positions 1-18 (MFGTPSSSPSFGTPSSTP) are enriched in low complexity. Residues 1–104 (MFGTPSSSPS…NTAQQQQQTP (104 aa)) are disordered. A run of 7 repeats spans residues 2 to 3 (FG), 11 to 12 (FG), 20 to 21 (FG), 27 to 28 (FG), 36 to 37 (FG), 49 to 50 (FG), and 87 to 88 (FG). A 7 X 2 AA repeats of F-G region spans residues 2–88 (FGTPSSSPSF…FQQQPSSNFG (87 aa)). A compositionally biased stretch (polar residues) spans 19–32 (AFGTSSPAFGTPSA). The segment covering 39 to 104 (PSNPSFSSGG…NTAQQQQQTP (66 aa)) has biased composition (low complexity).

The protein belongs to the NUP54 family. In terms of assembly, part of the nuclear pore complex (NPC). The NPC has an eight-fold symmetrical structure comprising a central transport channel and two rings, the cytoplasmic and nuclear rings, to which eight filaments are attached. The cytoplasmic filaments have loose ends, while the nuclear filaments are joined in a distal ring, forming a nuclear basket. NPCs are highly dynamic in configuration and composition, and can be devided in 3 subcomplexes, the NUP62 subcomplex, the NUP107-160 subcomplex and the NUP93 subcomplex, containing approximately 30 different nucleoporin proteins.

Its subcellular location is the nucleus envelope. The protein resides in the nucleus. It is found in the nuclear pore complex. This is Nuclear pore complex protein NUP54 from Arabidopsis thaliana (Mouse-ear cress).